Consider the following 494-residue polypeptide: Glutamyl-tRNA(Gln) amidotransferase subunit A (494 aa).

Active-site charge relay system residues include K79 and S154. The active-site Acyl-ester intermediate is S178.

Belongs to the amidase family. GatA subfamily. Heterotrimer of A, B and C subunits.

The enzyme catalyses L-glutamyl-tRNA(Gln) + L-glutamine + ATP + H2O = L-glutaminyl-tRNA(Gln) + L-glutamate + ADP + phosphate + H(+). In terms of biological role, allows the formation of correctly charged Gln-tRNA(Gln) through the transamidation of misacylated Glu-tRNA(Gln) in organisms which lack glutaminyl-tRNA synthetase. The reaction takes place in the presence of glutamine and ATP through an activated gamma-phospho-Glu-tRNA(Gln). The chain is Glutamyl-tRNA(Gln) amidotransferase subunit A from Clostridium kluyveri (strain NBRC 12016).